Reading from the N-terminus, the 954-residue chain is Kinesin-like protein KIN-14Q (954 aa).

The Calponin-homology (CH) domain maps to 33–155 (AMRRYDAASW…CVLALKSFSE (123 aa)). Positions 374–699 (NIRVYCRVRP…LKFAERVASV (326 aa)) constitute a Kinesin motor domain. An ATP-binding site is contributed by 457-464 (GQTGSGKT). Positions 704 to 733 (AKANKEGSEVRELKEQIATLKAALAKKEGE) form a coiled coil. The segment covering 844–855 (YDPDKQRRRAEP) has biased composition (basic and acidic residues). Disordered stretches follow at residues 844 to 876 (YDPD…DQEM) and 912 to 954 (PNLA…NTPK). The span at 864–873 (FDAATSSPSD) shows a compositional bias: low complexity. A compositionally biased stretch (polar residues) spans 928-954 (PIRNSKQLPFSTTGGRRTRNGKINTPK).

Belongs to the TRAFAC class myosin-kinesin ATPase superfamily. Kinesin family. KIN-14 subfamily. In terms of assembly, forms oligomers in vitro. Interacts with actin microfilaments. Binds to actin in vitro through its calponin-homology (CH) domain. Expressed in primary leaf, primary root, developing flower and coleoptile.

The protein resides in the cytoplasm. It is found in the cytoskeleton. The microtubule-dependent ATPase activity is regulated by actin binding. In terms of biological role, minus end-directed motor protein that transports actin filaments along microtubules. Plays a central role in the polar orientation of actin filaments along microtubules, and thus a contribution to the organization of the cytoskeletal architecture. Links the actin microfilaments with the cortical microtubules in both cycling and non-cycling cells. Required for efficient cell elongation by its participation in the premitotic nuclear positioning. The protein is Kinesin-like protein KIN-14Q of Oryza sativa subsp. japonica (Rice).